We begin with the raw amino-acid sequence, 718 residues long: Catalase-peroxidase (718 aa).

Positions tryptophan 98–tyrosine 219 form a cross-link, tryptophyl-tyrosyl-methioninium (Trp-Tyr) (with M-245). Histidine 99 functions as the Proton acceptor in the catalytic mechanism. A cross-link (tryptophyl-tyrosyl-methioninium (Tyr-Met) (with W-98)) is located at residues tyrosine 219–methionine 245. Histidine 260 is a heme b binding site.

This sequence belongs to the peroxidase family. Peroxidase/catalase subfamily. Homodimer or homotetramer. Heme b is required as a cofactor. Formation of the three residue Trp-Tyr-Met cross-link is important for the catalase, but not the peroxidase activity of the enzyme.

It catalyses the reaction H2O2 + AH2 = A + 2 H2O. The catalysed reaction is 2 H2O2 = O2 + 2 H2O. Functionally, bifunctional enzyme with both catalase and broad-spectrum peroxidase activity. In Acinetobacter baumannii (strain ACICU), this protein is Catalase-peroxidase.